We begin with the raw amino-acid sequence, 195 residues long: Packaging protein 2 (195 aa).

Residues 1–124 (MAPKKKLQLP…QEQQQRQGYR (124 aa)) form a disordered region. The span at 15-53 (TDEEEYWDSQAEEVLDEEEEMMEDWDSLDEASEAEEVSD) shows a compositional bias: acidic residues. Residues 54–63 (ETPSPSVAFP) are compositionally biased toward low complexity.

It belongs to the adenoviridae splicing factor family. As to quaternary structure, part of a genome packaging complex composed of packaging proteins 1, 2 and 3; this complex specifically binds to the packaging sequence on the left end of viral genomic DNA and performs packaging of the viral genome. Self-assembles into higher-order structures.

The protein localises to the host nucleus. Functionally, component of the packaging machinery which encapsidates the viral DNA into preformed capsids and transcriptional activator of the viral major late promoter (MLP). Binds, along with packaging proteins 1 and 3, to the specific packaging sequence on the left end of viral genomic DNA and plays an active role in packaging of the viral genome into preformed capsids. Specifically binds to the 5'-TTTG-3' nucleotides of the repeats making up the packaging sequence. Forms a transcription factor called DEF-A through cooperative binding with packaging protein 1. DEF-A binds to downstream elements of the major late promoter (MLP) and stimulates transcription from the MLP after initiation of viral DNA replication. Simultaneously suppresses early gene expression and is thus likely to participate in the early-late switch in the expression pattern of the late viral proteins. May as well enhance transcription from IVa2 and pIX promoters. This chain is Packaging protein 2, found in Homo sapiens (Human).